Here is a 558-residue protein sequence, read N- to C-terminus: Arginine--tRNA ligase (558 aa).

Residues 119 to 129 (ANPDGPLHVGH) carry the 'HIGH' region motif.

Belongs to the class-I aminoacyl-tRNA synthetase family.

The protein localises to the cytoplasm. The enzyme catalyses tRNA(Arg) + L-arginine + ATP = L-arginyl-tRNA(Arg) + AMP + diphosphate. This chain is Arginine--tRNA ligase, found in Methanothrix thermoacetophila (strain DSM 6194 / JCM 14653 / NBRC 101360 / PT) (Methanosaeta thermophila).